Consider the following 188-residue polypeptide: Elongation factor P (188 aa).

It belongs to the elongation factor P family.

The protein localises to the cytoplasm. It functions in the pathway protein biosynthesis; polypeptide chain elongation. Its function is as follows. Involved in peptide bond synthesis. Stimulates efficient translation and peptide-bond synthesis on native or reconstituted 70S ribosomes in vitro. Probably functions indirectly by altering the affinity of the ribosome for aminoacyl-tRNA, thus increasing their reactivity as acceptors for peptidyl transferase. The protein is Elongation factor P of Rhodopseudomonas palustris (strain HaA2).